Consider the following 106-residue polypeptide: Photosystem II 5 kDa protein, chloroplastic (106 aa).

Residues 1 to 76 constitute a chloroplast transit peptide; that stretch reads MASITMMSSF…ACSVAKTAMA (76 aa). Cysteines 95 and 104 form a disulfide.

In terms of processing, disulfide bond. Expressed in midvein, lamina and periphery of leaves (at protein level).

The protein resides in the plastid. It localises to the chloroplast thylakoid membrane. Functionally, may be a component of the oxygen-evolving complex. The protein is Photosystem II 5 kDa protein, chloroplastic of Petunia hybrida (Petunia).